The sequence spans 484 residues: UDP-N-acetylmuramoyl-L-alanyl-D-glutamate--L-lysine ligase (484 aa).

Ser-43 contributes to the UDP-N-acetyl-alpha-D-muramoyl-L-alanyl-D-glutamate binding site. 119-125 (GTKGKTT) is a binding site for ATP. UDP-N-acetyl-alpha-D-muramoyl-L-alanyl-D-glutamate contacts are provided by residues 161-162 (TT), Ser-188, and Arg-196. Position 230 is an N6-carboxylysine (Lys-230). Residues 405–408 (DDPN) carry the L-lysine recognition motif motif.

The protein belongs to the MurCDEF family. MurE subfamily. In terms of processing, carboxylation is probably crucial for Mg(2+) binding and, consequently, for the gamma-phosphate positioning of ATP.

It is found in the cytoplasm. The catalysed reaction is UDP-N-acetyl-alpha-D-muramoyl-L-alanyl-D-glutamate + L-lysine + ATP = UDP-N-acetyl-alpha-D-muramoyl-L-alanyl-gamma-D-glutamyl-L-lysine + ADP + phosphate + H(+). It functions in the pathway cell wall biogenesis; peptidoglycan biosynthesis. Functionally, catalyzes the addition of L-lysine to the nucleotide precursor UDP-N-acetylmuramoyl-L-alanyl-D-glutamate (UMAG) in the biosynthesis of bacterial cell-wall peptidoglycan. In Streptococcus agalactiae serotype III (strain NEM316), this protein is UDP-N-acetylmuramoyl-L-alanyl-D-glutamate--L-lysine ligase.